We begin with the raw amino-acid sequence, 247 residues long: MGQKVSPIGLRLGINKVWSSRWYAGPREYAALLHEDLRIRSMIRSFPECKNADIAEVEIVRHPQRVTVVMHTARPGVVIGAKGVNIEKIGAEVQKRLNKKVQIKVKEIKRMELNAYLVAQNVARQLTARVSFRKCLRQACAGTMKSGAQGVKIRVSGRLGGAEMSRTEEIKEGRTPLHTLRADIDYGFAEAHTTYGSIGVKVWLYSGMMYGNECRKDVGSLLRRSRRESGQKSDELVRDERTHAERG.

A KH type-2 domain is found at 39–109 (IRSMIRSFPE…KVQIKVKEIK (71 aa)). The tract at residues 224-247 (RSRRESGQKSDELVRDERTHAERG) is disordered. Basic and acidic residues predominate over residues 227 to 247 (RESGQKSDELVRDERTHAERG).

This sequence belongs to the universal ribosomal protein uS3 family. As to quaternary structure, part of the 30S ribosomal subunit. Forms a tight complex with proteins S10 and S14.

In terms of biological role, binds the lower part of the 30S subunit head. Binds mRNA in the 70S ribosome, positioning it for translation. The protein is Small ribosomal subunit protein uS3 of Treponema pallidum (strain Nichols).